The chain runs to 1055 residues: Inactive exonuclease DIS3L2 (1055 aa).

Disordered regions lie at residues 1–109 (MKSA…SSPE) and 229–249 (SAAK…KARQ). Over residues 17-32 (HKKKRNRPQKQNRRSK) the composition is skewed to basic residues. A compositionally biased stretch (basic and acidic residues) spans 39 to 59 (EDAHVEESLDGRDSSRSKAKD). The segment covering 97–108 (PRRSASPLLSSP) has biased composition (low complexity). Residues 367–446 (YVQLMPADPR…PQINAILYQN (80 aa)) enclose the CSD2 domain. One can recognise an RNB domain in the interval 476–824 (RKDLRDLCVL…VHRALAAALE (349 aa)). Residues aspartate 488 and aspartate 497 each coordinate Mg(2+).

This sequence belongs to the RNR ribonuclease family. DIS3L2 subfamily.

Its subcellular location is the cytoplasm. Probable inactive 3'-5'-exoribonuclease. Is unable to complement the growth defect of a yeast mutant lacking RRP44 exonuclease. In Arabidopsis thaliana (Mouse-ear cress), this protein is Inactive exonuclease DIS3L2.